The chain runs to 283 residues: MKHSFSRFFGLGEKEQEPEIAEHDTNKEEILEIPVNAIVPNRFQPRTIFSDEKIKELAMTIHTHGIIQPIVVRHTEEEGQYELIAGERRWRAVQSLEWEKIPAIIKDFSDTETASVALIENLQREELSSIEEAHAYARLLELHDLTQEALAQRLGKGQSTIANKLRLLKLPQPVQEAIMEKKITERHARALIPLKQPELQVTLLTEIIEKSLNVKQTEDRVVKMLEQGQRKPKPRRKAFSRDTRIAMNTIRQSLSMVEDSGVKLNTEEEEFEEYIQLTIRIPK.

Positions 148-167 (EALAQRLGKGQSTIANKLRL) form a DNA-binding region, H-T-H motif.

It belongs to the ParB family.

It localises to the cytoplasm. The protein localises to the nucleoid. Functionally, effects nucleoid occlusion by binding relatively nonspecifically to DNA and preventing the assembly of the division machinery in the vicinity of the nucleoid, especially under conditions that disturb the cell cycle. It helps to coordinate cell division and chromosome segregation by preventing the formation of the Z ring through the nucleoid, which would cause chromosome breakage. The sequence is that of Nucleoid occlusion protein (noc) from Bacillus subtilis (strain 168).